The following is a 729-amino-acid chain: Solute carrier family 15 member 2 (729 aa).

A disordered region spans residues 1-35; sequence MNPFQKNESKETLFSPVSTEEMLPRPPSPPKKSPP. The Cytoplasmic segment spans residues 1–57; it reads MNPFQKNESKETLFSPVSTEEMLPRPPSPPKKSPPKIFGSSYPVSIAFIVVNEFCER. Residue serine 9 is modified to Phosphoserine. Threonine 12 carries the post-translational modification Phosphothreonine. Position 28 is a phosphoserine (serine 28). Residues 58-78 traverse the membrane as a helical segment; that stretch reads FSYYGMKAVLTLYFLYFLHWN. Residues 79 to 87 lie on the Extracellular side of the membrane; sequence EDTSTSVYH. Residues 88-108 form a helical membrane-spanning segment; that stretch reads AFSSLCYFTPILGAAIADSWL. Residues 109–113 lie on the Cytoplasmic side of the membrane; sequence GKFKT. Residues 114–134 traverse the membrane as a helical segment; the sequence is IIYLSLVYVLGHVFKSLGAIP. Over 135–139 the chain is Extracellular; the sequence is ILGGK. Residues 140–160 form a helical membrane-spanning segment; it reads MLHTILSLVGLSLIALGTGGI. Residues 161-183 lie on the Cytoplasmic side of the membrane; sequence KPCVAAFGGDQFEEEHAEARTRY. A helical transmembrane segment spans residues 184-204; sequence FSVFYLAINAGSLISTFITPM. Residues 205-217 lie on the Extracellular side of the membrane; the sequence is LRGDVKCFGQDCY. A helical transmembrane segment spans residues 218 to 238; that stretch reads ALAFGVPGLLMVLALVVFAMG. At 239–295 the chain is on the cytoplasmic side; the sequence is SKMYRKPPPEGNIVAQVIKCIWFALCNRFRNRSGDLPKRQHWLDWAAEKYPKHLIAD. The helical transmembrane segment at 296–316 threads the bilayer; sequence VKALTRVLFLYIPLPMFWALL. Topologically, residues 317 to 343 are extracellular; that stretch reads DQQGSRWTLQANKMNGDLGFFVLQPDQ. The chain crosses the membrane as a helical span at residues 344–364; that stretch reads MQVLNPFLVLIFIPLFDLVIY. Residues 365-380 lie on the Cytoplasmic side of the membrane; sequence RLISKCRINFSSLRKM. A helical transmembrane segment spans residues 381–401; it reads AVGMILACLAFAVAALVETKI. Topologically, residues 402–611 are extracellular; the sequence is NGMIHPQPAS…PVNKLSIAWQ (210 aa). The tract at residues 402-611 is extracellular domain (ECD); sequence NGMIHPQPAS…PVNKLSIAWQ (210 aa). N-linked (GlcNAc...) asparagine glycosylation is found at asparagine 435, asparagine 448, asparagine 528, and asparagine 587. A helical membrane pass occupies residues 612-632; the sequence is LPQYVLVTAAEVMFSVTGLEF. The Cytoplasmic segment spans residues 633 to 643; that stretch reads SYSQAPSSMKS. A helical membrane pass occupies residues 644–664; the sequence is VLQAAWLLTVAVGNIIVLVVA. Over 665–674 the chain is Extracellular; it reads QFSGLAQWAE. A helical transmembrane segment spans residues 675–695; that stretch reads FVLFSCLLLVVCLIFSVMAYY. Over 696–729 the chain is Cytoplasmic; the sequence is YVPLKSEDTREATDKQIPAVQGNMINLETKNTRL.

This sequence belongs to the major facilitator superfamily. Proton-dependent oligopeptide transporter (POT/PTR) (TC 2.A.17) family. As to quaternary structure, interacts (via extracellular domain region) with trypsin. Strongly expressed in kidney cortex and medulla. Also detected in brain, lung and spleen. Expressed in choroid plexus.

It localises to the apical cell membrane. Its subcellular location is the cytoplasmic vesicle. The protein localises to the phagosome membrane. It is found in the cell membrane. The catalysed reaction is a dipeptide(out) + 2 H(+)(out) = a dipeptide(in) + 2 H(+)(in). It carries out the reaction glycyl-L-leucine(out) + 2 H(+)(out) = glycyl-L-leucine(in) + 2 H(+)(in). The enzyme catalyses glycyl-L-lysine(out) + 2 H(+)(out) = glycyl-L-lysine(in) + 2 H(+)(in). It catalyses the reaction glycyl-L-glutamate(out) + 3 H(+)(out) = glycyl-L-glutamate(in) + 3 H(+)(in). The catalysed reaction is L-alanyl-L-alanine(out) + 2 H(+)(out) = L-alanyl-L-alanine(in) + 2 H(+)(in). It carries out the reaction an L-amino acid tripeptide(out) + 2 H(+)(out) = an L-amino acid tripeptide(in) + 2 H(+)(in). The enzyme catalyses N-acetyl-D-muramoyl-L-alanyl-D-isoglutamine(out) + 3 H(+)(out) = N-acetyl-D-muramoyl-L-alanyl-D-isoglutamine(in) + 3 H(+)(in). It catalyses the reaction carnosine(out) + 2 H(+)(out) = carnosine(in) + 2 H(+)(in). Its function is as follows. Proton-coupled amino-acid transporter that transports oligopeptides of 2 to 4 amino acids with a preference for dipeptides. Transports neutral and anionic dipeptides with a proton to peptide stoichiometry of 2:1 or 3:1. In kidney, involved in the absorption of circulating di- and tripeptides from the glomerular filtrate. Can also transport beta-lactam antibiotics, such as the aminocephalosporin cefadroxil, and other antiviral and anticancer drugs. Transports the dipeptide-like aminopeptidase inhibitor bestatin. Also able to transport carnosine. Involved in innate immunity by promoting the detection of microbial pathogens by NOD-like receptors (NLRs). Mediates transport of bacterial peptidoglycans across the plasma membrane or, in macrophages, the phagosome membrane: catalyzes the transport of certain bacterial peptidoglycans, such as muramyl dipeptide (MDP), the NOD2 ligand. This is Solute carrier family 15 member 2 from Rattus norvegicus (Rat).